A 284-amino-acid chain; its full sequence is Protein G1-like9 (284 aa).

Residues 1 to 69 are disordered; it reads MEPSPDAPRA…PAAAGLSRYE (69 aa). Composition is skewed to low complexity over residues 13–32 and 40–63; these read AEEQPGPSSSASAPAPAASS and QSQAQQQVQEAQPQPLAQQAPAAA. One can recognise an ALOG domain in the interval 67–194; the sequence is RYESQKRRDW…ARGIPYEKKR (128 aa). The Nuclear localization signal motif lies at 192–196; the sequence is KKRKR. Residues 209–284 are disordered; that stretch reads VAPPPVVTAP…SAAKGSATSS (76 aa). The segment covering 246–284 has biased composition (low complexity); sequence TTPAASPTTPPATSVGTTTAAATAAAAKGSAAKGSATSS.

This sequence belongs to the plant homeotic and developmental regulators ALOG protein family.

The protein localises to the nucleus. Functionally, probable transcription regulator that acts as a developmental regulator by promoting cell growth in response to light. This Oryza sativa subsp. indica (Rice) protein is Protein G1-like9.